Reading from the N-terminus, the 360-residue chain is Photosystem II protein D1 (360 aa).

3 consecutive transmembrane segments (helical) span residues 29–46 (YIGW…TATT), 118–133 (HFLL…EWEF), and 142–156 (WISV…AASA). Histidine 118 contacts chlorophyll a. Tryptophan 126 lines the pheophytin a pocket. Residues aspartate 170 and glutamate 189 each coordinate [CaMn4O5] cluster. The chain crosses the membrane as a helical span at residues 197–218 (FHQLGVAGVFGGSLFSAMHGSL). Histidine 198 contacts chlorophyll a. A quinone is bound by residues histidine 215 and 264–265 (SF). Histidine 215 is a binding site for Fe cation. A Fe cation-binding site is contributed by histidine 272. Residues 274–288 (FLGLWPVVGIWFTAL) traverse the membrane as a helical segment. 4 residues coordinate [CaMn4O5] cluster: histidine 332, glutamate 333, aspartate 342, and alanine 344. The propeptide occupies 345–360 (AGESLPVALTAPAVNG).

Belongs to the reaction center PufL/M/PsbA/D family. In terms of assembly, PSII is composed of 1 copy each of membrane proteins PsbA, PsbB, PsbC, PsbD, PsbE, PsbF, PsbH, PsbI, PsbJ, PsbK, PsbL, PsbM, PsbT, PsbX, PsbY, PsbZ, Psb30/Ycf12, at least 3 peripheral proteins of the oxygen-evolving complex and a large number of cofactors. It forms dimeric complexes. It depends on The D1/D2 heterodimer binds P680, chlorophylls that are the primary electron donor of PSII, and subsequent electron acceptors. It shares a non-heme iron and each subunit binds pheophytin, quinone, additional chlorophylls, carotenoids and lipids. D1 provides most of the ligands for the Mn4-Ca-O5 cluster of the oxygen-evolving complex (OEC). There is also a Cl(-1) ion associated with D1 and D2, which is required for oxygen evolution. The PSII complex binds additional chlorophylls, carotenoids and specific lipids. as a cofactor. Tyr-161 forms a radical intermediate that is referred to as redox-active TyrZ, YZ or Y-Z. Post-translationally, C-terminally processed by CTPA; processing is essential to allow assembly of the oxygen-evolving complex and thus photosynthetic growth.

It is found in the plastid. Its subcellular location is the chloroplast thylakoid membrane. It carries out the reaction 2 a plastoquinone + 4 hnu + 2 H2O = 2 a plastoquinol + O2. In terms of biological role, photosystem II (PSII) is a light-driven water:plastoquinone oxidoreductase that uses light energy to abstract electrons from H(2)O, generating O(2) and a proton gradient subsequently used for ATP formation. It consists of a core antenna complex that captures photons, and an electron transfer chain that converts photonic excitation into a charge separation. The D1/D2 (PsbA/PsbD) reaction center heterodimer binds P680, the primary electron donor of PSII as well as several subsequent electron acceptors. This is Photosystem II protein D1 from Rhodomonas salina (Cryptomonas salina).